The primary structure comprises 141 residues: Large ribosomal subunit protein uL11 (141 aa).

Belongs to the universal ribosomal protein uL11 family. Part of the ribosomal stalk of the 50S ribosomal subunit. Interacts with L10 and the large rRNA to form the base of the stalk. L10 forms an elongated spine to which L12 dimers bind in a sequential fashion forming a multimeric L10(L12)X complex. In terms of processing, one or more lysine residues are methylated.

Its function is as follows. Forms part of the ribosomal stalk which helps the ribosome interact with GTP-bound translation factors. In Geobacter sulfurreducens (strain ATCC 51573 / DSM 12127 / PCA), this protein is Large ribosomal subunit protein uL11.